The following is a 414-amino-acid chain: Esterase FrsA (414 aa).

The protein belongs to the FrsA family.

The enzyme catalyses a carboxylic ester + H2O = an alcohol + a carboxylate + H(+). Functionally, catalyzes the hydrolysis of esters. This is Esterase FrsA from Escherichia coli O7:K1 (strain IAI39 / ExPEC).